We begin with the raw amino-acid sequence, 209 residues long: Large ribosomal subunit protein uL3 (209 aa).

It belongs to the universal ribosomal protein uL3 family. As to quaternary structure, part of the 50S ribosomal subunit. Forms a cluster with proteins L14 and L19.

Functionally, one of the primary rRNA binding proteins, it binds directly near the 3'-end of the 23S rRNA, where it nucleates assembly of the 50S subunit. This chain is Large ribosomal subunit protein uL3, found in Clostridium botulinum (strain Okra / Type B1).